We begin with the raw amino-acid sequence, 79 residues long: Conotoxin ArMSGL-021 (79 aa).

Residues 1 to 20 form the signal peptide; that stretch reads MSRLGIMVLTLLLLVFIVTS. Residues 21-44 constitute a propeptide that is removed on maturation; sequence HQDAGEKQATHRGAINFRWRRSLI. 3 disulfides stabilise this stretch: C52/C64, C56/C73, and C63/C77. Leucine amide is present on L78.

Belongs to the conotoxin O3 superfamily. As to expression, expressed by the venom duct.

The protein resides in the secreted. This chain is Conotoxin ArMSGL-021, found in Conus arenatus (Sand-dusted cone).